A 110-amino-acid chain; its full sequence is Iron-sulfur cluster assembly protein CyaY (110 aa).

This sequence belongs to the frataxin family.

Involved in iron-sulfur (Fe-S) cluster assembly. May act as a regulator of Fe-S biogenesis. The chain is Iron-sulfur cluster assembly protein CyaY from Pseudomonas syringae pv. syringae (strain B728a).